The following is a 329-amino-acid chain: Glycerol-3-phosphate dehydrogenase [NAD(P)+] (329 aa).

Residues tryptophan 11 and lysine 101 each contribute to the NADPH site. Residues lysine 101, glycine 132, and serine 134 each contribute to the sn-glycerol 3-phosphate site. Position 136 (alanine 136) interacts with NADPH. Residues lysine 188, aspartate 241, serine 251, arginine 252, and asparagine 253 each coordinate sn-glycerol 3-phosphate. Residue lysine 188 is the Proton acceptor of the active site. An NADPH-binding site is contributed by arginine 252. 2 residues coordinate NADPH: valine 276 and glutamate 278.

Belongs to the NAD-dependent glycerol-3-phosphate dehydrogenase family.

Its subcellular location is the cytoplasm. It carries out the reaction sn-glycerol 3-phosphate + NAD(+) = dihydroxyacetone phosphate + NADH + H(+). It catalyses the reaction sn-glycerol 3-phosphate + NADP(+) = dihydroxyacetone phosphate + NADPH + H(+). The protein operates within membrane lipid metabolism; glycerophospholipid metabolism. Functionally, catalyzes the reduction of the glycolytic intermediate dihydroxyacetone phosphate (DHAP) to sn-glycerol 3-phosphate (G3P), the key precursor for phospholipid synthesis. The chain is Glycerol-3-phosphate dehydrogenase [NAD(P)+] from Phytoplasma australiense.